We begin with the raw amino-acid sequence, 356 residues long: MLDRLKSIEDRYEKLNELLSDPEVVNDPKKLREYSKEQSDLQETVEVYRRYRSASEQLSDAKAMLEEKLDSDMREMVKEEISELQEEIESLTDQLKVLLIPKDPNDDKNVIMEIRGAAGGEEAALFAGNLYRMYSRYAELQGWKTEVMEANMTGTGGYKEIIFMINGNGAYSRLKYENGAHRVQRVPETESGGRIHTSTATVACLPEAEEVEVDIHEKDIRVDTFASSGPGGQSVNTTMSAVRLTHLPTGVVVSCQDEKSQIKNKEKAMKVLRARIYDKFQQEAQAEYDQNRKSAVGTGDRSERIRTYNFPQNRVTDHRIGLTIQKLDQILEGKLDEVIDALIVEDQASKLQQAES.

Residue Q233 is modified to N5-methylglutamine.

This sequence belongs to the prokaryotic/mitochondrial release factor family. Post-translationally, methylated by PrmC. Methylation increases the termination efficiency of RF1.

It localises to the cytoplasm. In terms of biological role, peptide chain release factor 1 directs the termination of translation in response to the peptide chain termination codons UAG and UAA. The protein is Peptide chain release factor 1 of Bacillus licheniformis (strain ATCC 14580 / DSM 13 / JCM 2505 / CCUG 7422 / NBRC 12200 / NCIMB 9375 / NCTC 10341 / NRRL NRS-1264 / Gibson 46).